We begin with the raw amino-acid sequence, 362 residues long: Histidinol-phosphate aminotransferase (362 aa).

Lys220 bears the N6-(pyridoxal phosphate)lysine mark.

The protein belongs to the class-II pyridoxal-phosphate-dependent aminotransferase family. Histidinol-phosphate aminotransferase subfamily. As to quaternary structure, homodimer. Requires pyridoxal 5'-phosphate as cofactor.

It carries out the reaction L-histidinol phosphate + 2-oxoglutarate = 3-(imidazol-4-yl)-2-oxopropyl phosphate + L-glutamate. The protein operates within amino-acid biosynthesis; L-histidine biosynthesis; L-histidine from 5-phospho-alpha-D-ribose 1-diphosphate: step 7/9. The sequence is that of Histidinol-phosphate aminotransferase from Rhodospirillum centenum (strain ATCC 51521 / SW).